A 571-amino-acid chain; its full sequence is Urease subunit alpha (571 aa).

Ni(2+) is bound by residues His-138, His-140, and Lys-221. N6-carboxylysine is present on Lys-221. Residue His-223 participates in substrate binding. Ni(2+) contacts are provided by His-250 and His-276. The active-site Proton donor is the His-324. Ni(2+) is bound at residue Asp-364.

The protein belongs to the metallo-dependent hydrolases superfamily. Urease alpha subunit family. In terms of assembly, heterotrimer of UreA (gamma), UreB (beta) and UreC (alpha) subunits. Three heterotrimers associate to form the active enzyme. It depends on Ni cation as a cofactor. Carboxylation allows a single lysine to coordinate two nickel ions.

It localises to the cytoplasm. The catalysed reaction is urea + 2 H2O + H(+) = hydrogencarbonate + 2 NH4(+). Its pathway is nitrogen metabolism; urea degradation; CO(2) and NH(3) from urea (urease route): step 1/1. In Staphylococcus aureus (strain JH9), this protein is Urease subunit alpha.